A 334-amino-acid chain; its full sequence is N-acetyl-gamma-glutamyl-phosphate reductase (334 aa).

Residue Cys-154 is part of the active site.

Belongs to the NAGSA dehydrogenase family. Type 1 subfamily.

It localises to the cytoplasm. The enzyme catalyses N-acetyl-L-glutamate 5-semialdehyde + phosphate + NADP(+) = N-acetyl-L-glutamyl 5-phosphate + NADPH + H(+). Its pathway is amino-acid biosynthesis; L-arginine biosynthesis; N(2)-acetyl-L-ornithine from L-glutamate: step 3/4. In terms of biological role, catalyzes the NADPH-dependent reduction of N-acetyl-5-glutamyl phosphate to yield N-acetyl-L-glutamate 5-semialdehyde. In Buchnera aphidicola subsp. Schizaphis graminum (strain Sg), this protein is N-acetyl-gamma-glutamyl-phosphate reductase.